The primary structure comprises 107 residues: uncharacterized protein (107 aa).

A run of 2 helical transmembrane segments spans residues 11 to 31 (CVNFVIIIGIPLLIEASILCI) and 58 to 78 (LFFLSFYMLHFPITLSILAFQ).

The protein localises to the mitochondrion membrane. This is an uncharacterized protein from Saccharomyces cerevisiae (strain ATCC 204508 / S288c) (Baker's yeast).